The sequence spans 296 residues: Probable endonuclease 4 (296 aa).

9 residues coordinate Zn(2+): histidine 68, histidine 109, glutamate 144, aspartate 178, histidine 181, histidine 213, aspartate 226, histidine 228, and glutamate 258.

It belongs to the AP endonuclease 2 family. It depends on Zn(2+) as a cofactor.

The catalysed reaction is Endonucleolytic cleavage to 5'-phosphooligonucleotide end-products.. Its function is as follows. Endonuclease IV plays a role in DNA repair. It cleaves phosphodiester bonds at apurinic or apyrimidinic (AP) sites, generating a 3'-hydroxyl group and a 5'-terminal sugar phosphate. The polypeptide is Probable endonuclease 4 (Staphylococcus saprophyticus subsp. saprophyticus (strain ATCC 15305 / DSM 20229 / NCIMB 8711 / NCTC 7292 / S-41)).